Consider the following 299-residue polypeptide: F-actin-capping protein subunit alpha-3 (299 aa).

Phosphoserine is present on residues Ser2 and Ser290.

This sequence belongs to the F-actin-capping protein alpha subunit family. As to quaternary structure, component of the F-actin capping complex, composed of a heterodimer of an alpha and a beta subunit. Component of the WASH complex, composed of F-actin-capping protein subunit alpha (CAPZA1, CAPZA2 or CAPZA3), F-actin-capping protein subunit beta (CAPZB), WASHC1, WASHC2, WASHC3, WASHC4 and WASHC5. As to expression, exclusively expressed in the testis.

It localises to the cytoplasm. The protein localises to the cytoskeleton. F-actin-capping proteins bind in a Ca(2+)-independent manner to the fast growing ends of actin filaments (barbed end) thereby blocking the exchange of subunits at these ends. Unlike other capping proteins (such as gelsolin and severin), these proteins do not sever actin filaments. May play a role in the morphogenesis of spermatid. The sequence is that of F-actin-capping protein subunit alpha-3 (Capza3) from Mus musculus (Mouse).